A 264-amino-acid chain; its full sequence is MLDKKMSIATLKAKKGIEKITAITAYDALMARIFDGEVDVILVGDSLKMSFGGENETLGASMQEMIYHTKAVCKGAKHSFIIADMPFGSYATPNMALKNALRFYKNTAADALKLEVGIDKLPVVKVLCEEGIAVMAHIGLKPQFMRFDGGFKIKGKDEVESQELIEAAVAFQEAGVFGILIEGVKSESGARITQALEIPTIGIGAGVECDGQILVWSDAFGFFDEFKPKFVRRYCDGKAILKDAIRAYAKDVKSQAFPQAQESY.

Positions 45 and 84 each coordinate Mg(2+). Residues 45–46, Asp-84, and Lys-113 contribute to the 3-methyl-2-oxobutanoate site; that span reads DS. Glu-115 is a binding site for Mg(2+). The active-site Proton acceptor is Glu-182.

Belongs to the PanB family. In terms of assembly, homodecamer; pentamer of dimers. It depends on Mg(2+) as a cofactor.

It is found in the cytoplasm. It catalyses the reaction 3-methyl-2-oxobutanoate + (6R)-5,10-methylene-5,6,7,8-tetrahydrofolate + H2O = 2-dehydropantoate + (6S)-5,6,7,8-tetrahydrofolate. The protein operates within cofactor biosynthesis; (R)-pantothenate biosynthesis; (R)-pantoate from 3-methyl-2-oxobutanoate: step 1/2. Its function is as follows. Catalyzes the reversible reaction in which hydroxymethyl group from 5,10-methylenetetrahydrofolate is transferred onto alpha-ketoisovalerate to form ketopantoate. The polypeptide is 3-methyl-2-oxobutanoate hydroxymethyltransferase (Helicobacter hepaticus (strain ATCC 51449 / 3B1)).